The primary structure comprises 356 residues: Putative methylthioribose-1-phosphate isomerase (356 aa).

Substrate contacts are provided by residues 57-59 (RGA), R100, and Q206. The Proton donor role is filled by D247. 257–258 (NK) is a binding site for substrate.

The protein belongs to the eIF-2B alpha/beta/delta subunits family. MtnA subfamily.

It catalyses the reaction 5-(methylsulfanyl)-alpha-D-ribose 1-phosphate = 5-(methylsulfanyl)-D-ribulose 1-phosphate. Functionally, catalyzes the interconversion of methylthioribose-1-phosphate (MTR-1-P) into methylthioribulose-1-phosphate (MTRu-1-P). This Pyrococcus abyssi (strain GE5 / Orsay) protein is Putative methylthioribose-1-phosphate isomerase (aIF-2BI).